We begin with the raw amino-acid sequence, 411 residues long: Serine hydroxymethyltransferase (411 aa).

(6S)-5,6,7,8-tetrahydrofolate-binding positions include L119 and 123 to 125 (GHL). The residue at position 228 (K228) is an N6-(pyridoxal phosphate)lysine. 351-353 (SPF) is a binding site for (6S)-5,6,7,8-tetrahydrofolate.

The protein belongs to the SHMT family. As to quaternary structure, homodimer. Pyridoxal 5'-phosphate serves as cofactor.

It is found in the cytoplasm. The enzyme catalyses (6R)-5,10-methylene-5,6,7,8-tetrahydrofolate + glycine + H2O = (6S)-5,6,7,8-tetrahydrofolate + L-serine. The protein operates within one-carbon metabolism; tetrahydrofolate interconversion. It functions in the pathway amino-acid biosynthesis; glycine biosynthesis; glycine from L-serine: step 1/1. Its function is as follows. Catalyzes the reversible interconversion of serine and glycine with tetrahydrofolate (THF) serving as the one-carbon carrier. This reaction serves as the major source of one-carbon groups required for the biosynthesis of purines, thymidylate, methionine, and other important biomolecules. Also exhibits THF-independent aldolase activity toward beta-hydroxyamino acids, producing glycine and aldehydes, via a retro-aldol mechanism. This is Serine hydroxymethyltransferase from Clostridium novyi (strain NT).